A 662-amino-acid polypeptide reads, in one-letter code: Methyl-accepting chemotaxis protein TlpA (662 aa).

Residues 1-16 are Cytoplasmic-facing; the sequence is MKKTLTTIRRSSIARR. The chain crosses the membrane as a helical span at residues 17 to 37; sequence LIISFLLILIVPITALSVSAY. The Extracellular segment spans residues 38–281; the sequence is QSAVASLDVQ…IHDAASRVLI (244 aa). The Cache domain occupies 152–228; that stretch reads VTEPYESISS…KAGTELKGDW (77 aa). The helical transmembrane segment at 282 to 302 threads the bilayer; that stretch reads MASIVLAIAIGAGMTAIYFVI. Residues 303-355 form the HAMP domain; that stretch reads RSITKPLRRIVASAEKISEGDLTETIEINSKDELGVLSESFNHMAHSLRSLIH. Over 303–662 the chain is Cytoplasmic; the sequence is RSITKPLRRI…DLTKQFKVDK (360 aa). 4 positions are modified to glutamate methyl ester (Glu): glutamate 370, glutamate 594, glutamate 629, and glutamate 636. Residues 374–610 enclose the Methyl-accepting transducer domain; the sequence is SADQTSRATE…EISAASNDIT (237 aa).

This sequence belongs to the methyl-accepting chemotaxis (MCP) protein family. Interacts with YabA.

Its subcellular location is the cell membrane. Chemotactic-signal transducers respond to changes in the concentration of attractants and repellents in the environment, transduce a signal from the outside to the inside of the cell, and facilitate sensory adaptation through the variation of the level of methylation. All amino acids serve as attractants in B.subtilis, they appear to cause an increase in the turnover methyl groups, leading to methylation of an unidentified acceptor, while repellents have been shown to cause a decrease in methyl group turnover. The methyl groups are added by a methyltransferase and removed by a methylesterase. This chain is Methyl-accepting chemotaxis protein TlpA, found in Bacillus subtilis (strain 168).